Reading from the N-terminus, the 438-residue chain is 23S rRNA (uracil(1939)-C(5))-methyltransferase RlmD (438 aa).

Residues 10 to 69 (KASVNTKHQSVDVVRLDHNGAGIAFVDKKPVFIEGALPGEKAIIQFIEQKKQFSRAKLIK) form the TRAM domain. [4Fe-4S] cluster-binding residues include C82, C88, C91, and C169. S-adenosyl-L-methionine contacts are provided by Q272, F301, N306, E322, N349, and D370. The Nucleophile role is filled by C396.

The protein belongs to the class I-like SAM-binding methyltransferase superfamily. RNA M5U methyltransferase family. RlmD subfamily.

The enzyme catalyses uridine(1939) in 23S rRNA + S-adenosyl-L-methionine = 5-methyluridine(1939) in 23S rRNA + S-adenosyl-L-homocysteine + H(+). In terms of biological role, catalyzes the formation of 5-methyl-uridine at position 1939 (m5U1939) in 23S rRNA. The sequence is that of 23S rRNA (uracil(1939)-C(5))-methyltransferase RlmD from Aliivibrio fischeri (strain ATCC 700601 / ES114) (Vibrio fischeri).